The following is a 25-amino-acid chain: M-poneritoxin-Na1b (25 aa).

It belongs to the non-disulfide-bridged peptide (NDBP) superfamily. Medium-length antimicrobial peptide (group 3) family. Ponericin-W subfamily. In terms of tissue distribution, expressed by the venom gland.

It is found in the secreted. The protein resides in the target cell membrane. Its function is as follows. Membrane-perturbating peptide with multiple activities. It is insecticidal, since it induces reversible paralysis in insects (L.cuprina) after 1 hour, but fails to kill flies. It shows a relatively strong and broad-spectrum antibacterial activity against both Gram-positive and Gram-negative bacteria (MIC&lt;20 uM). It is also anthelmintic, since it potently inhibits the larval development of the major pathogenic nematode of ruminants (H.contortus, IC(50)=2.8 uM). Interestingly, only at 10 uM, it increases adult males motility of the other nematode B.malayi for 24 hours post-treatment, followed by a reduction in motility for the rest of the experiment. It shows cytotoxic activity against HEK293 cells (EC(50)=4-6 uM) and induces hemolysis in human erythrocytes (EC(50)=40-62 uM). In addition, it causes an important increase in intracellular calcium concentration on neuronal and epithelial cell lines, which supports a non-specific membrane perturbation mechanism of action. In vivo, it induces pain by intraplantar injection into mice, suggesting a defensive function against vertebrate predators. The polypeptide is M-poneritoxin-Na1b (Neoponera apicalis (Ant)).